A 353-amino-acid chain; its full sequence is Photosystem II protein D1 (353 aa).

Thr-2 carries the post-translational modification N-acetylthreonine. The residue at position 2 (Thr-2) is a Phosphothreonine. Transmembrane regions (helical) follow at residues 29-46 (YIGW…TATS), 118-133 (HFLL…EWEL), and 142-156 (WIVV…AATA). His-118 provides a ligand contact to chlorophyll a. Pheophytin a is bound at residue Tyr-126. Residues Asp-170 and Glu-189 each coordinate [CaMn4O5] cluster. A helical membrane pass occupies residues 197–218 (FHMLGVAGVFGGSLFSAMHGSL). A chlorophyll a-binding site is contributed by His-198. A quinone-binding positions include His-215 and 264–265 (SF). His-215 contacts Fe cation. Fe cation is bound at residue His-272. The chain crosses the membrane as a helical span at residues 274–288 (FLAAWPVVGIWFTAL). [CaMn4O5] cluster contacts are provided by His-332, Glu-333, Asp-342, and Ala-344. Positions 345-353 (AVDAPSISG) are excised as a propeptide.

It belongs to the reaction center PufL/M/PsbA/D family. As to quaternary structure, PSII is composed of 1 copy each of membrane proteins PsbA, PsbB, PsbC, PsbD, PsbE, PsbF, PsbH, PsbI, PsbJ, PsbK, PsbL, PsbM, PsbT, PsbX, PsbY, PsbZ, Psb30/Ycf12, at least 3 peripheral proteins of the oxygen-evolving complex and a large number of cofactors. It forms dimeric complexes. Requires The D1/D2 heterodimer binds P680, chlorophylls that are the primary electron donor of PSII, and subsequent electron acceptors. It shares a non-heme iron and each subunit binds pheophytin, quinone, additional chlorophylls, carotenoids and lipids. D1 provides most of the ligands for the Mn4-Ca-O5 cluster of the oxygen-evolving complex (OEC). There is also a Cl(-1) ion associated with D1 and D2, which is required for oxygen evolution. The PSII complex binds additional chlorophylls, carotenoids and specific lipids. as cofactor. Post-translationally, tyr-161 forms a radical intermediate that is referred to as redox-active TyrZ, YZ or Y-Z. C-terminally processed by CTPA; processing is essential to allow assembly of the oxygen-evolving complex and thus photosynthetic growth.

Its subcellular location is the plastid. The protein localises to the chloroplast thylakoid membrane. It catalyses the reaction 2 a plastoquinone + 4 hnu + 2 H2O = 2 a plastoquinol + O2. Its function is as follows. Photosystem II (PSII) is a light-driven water:plastoquinone oxidoreductase that uses light energy to abstract electrons from H(2)O, generating O(2) and a proton gradient subsequently used for ATP formation. It consists of a core antenna complex that captures photons, and an electron transfer chain that converts photonic excitation into a charge separation. The D1/D2 (PsbA/PsbD) reaction center heterodimer binds P680, the primary electron donor of PSII as well as several subsequent electron acceptors. In Vicia faba (Broad bean), this protein is Photosystem II protein D1.